We begin with the raw amino-acid sequence, 320 residues long: ATP phosphoribosyltransferase (320 aa).

The protein belongs to the ATP phosphoribosyltransferase family. Long subfamily. It depends on Mg(2+) as a cofactor.

It localises to the cytoplasm. It catalyses the reaction 1-(5-phospho-beta-D-ribosyl)-ATP + diphosphate = 5-phospho-alpha-D-ribose 1-diphosphate + ATP. It functions in the pathway amino-acid biosynthesis; L-histidine biosynthesis; L-histidine from 5-phospho-alpha-D-ribose 1-diphosphate: step 1/9. Its activity is regulated as follows. Feedback inhibited by histidine. Its function is as follows. Catalyzes the condensation of ATP and 5-phosphoribose 1-diphosphate to form N'-(5'-phosphoribosyl)-ATP (PR-ATP). Has a crucial role in the pathway because the rate of histidine biosynthesis seems to be controlled primarily by regulation of HisG enzymatic activity. This is ATP phosphoribosyltransferase (hisG) from Caulobacter vibrioides (strain ATCC 19089 / CIP 103742 / CB 15) (Caulobacter crescentus).